Reading from the N-terminus, the 398-residue chain is Enoyl-[acyl-carrier-protein] reductase [NADH] (398 aa).

NAD(+) is bound by residues 48-53 (GASTGY), 74-75 (FE), 111-112 (DA), and 139-140 (LA). Tyr-225 provides a ligand contact to substrate. The active-site Proton donor is the Tyr-235. NAD(+) is bound by residues Lys-244 and 273-275 (VVT).

It belongs to the TER reductase family. In terms of assembly, monomer.

The enzyme catalyses a 2,3-saturated acyl-[ACP] + NAD(+) = a (2E)-enoyl-[ACP] + NADH + H(+). It functions in the pathway lipid metabolism; fatty acid biosynthesis. In terms of biological role, involved in the final reduction of the elongation cycle of fatty acid synthesis (FAS II). Catalyzes the reduction of a carbon-carbon double bond in an enoyl moiety that is covalently linked to an acyl carrier protein (ACP). The polypeptide is Enoyl-[acyl-carrier-protein] reductase [NADH] (Paraburkholderia phytofirmans (strain DSM 17436 / LMG 22146 / PsJN) (Burkholderia phytofirmans)).